Consider the following 243-residue polypeptide: Ribonuclease 3 (243 aa).

Residues 10-146 (INRFRKRFDT…FIGALYLDQG (137 aa)) form the RNase III domain. E59 provides a ligand contact to Mg(2+). The active site involves D63. Residues D132 and E135 each contribute to the Mg(2+) site. Residue E135 is part of the active site. A DRBM domain is found at 172–241 (DFKTQFQEYV…AESAYKQLKQ (70 aa)). Residues 219-231 (GKGKTKKESEQRA) show a composition bias toward basic and acidic residues. The tract at residues 219-243 (GKGKTKKESEQRAAESAYKQLKQIK) is disordered.

It belongs to the ribonuclease III family. As to quaternary structure, homodimer. Requires Mg(2+) as cofactor.

It localises to the cytoplasm. It catalyses the reaction Endonucleolytic cleavage to 5'-phosphomonoester.. Functionally, digests double-stranded RNA. Involved in the processing of primary rRNA transcript to yield the immediate precursors to the large and small rRNAs (23S and 16S). Processes some mRNAs, and tRNAs when they are encoded in the rRNA operon. Processes pre-crRNA and tracrRNA of type II CRISPR loci if present in the organism. In Staphylococcus aureus (strain bovine RF122 / ET3-1), this protein is Ribonuclease 3.